The primary structure comprises 436 residues: UDP-glucuronate 4-epimerase 5 (436 aa).

2 helical membrane passes run 36–56 and 95–115; these read LTLWASLFLALFLFYLVLSPP and GLTVLVTGASGFVGTHVSIAL. 97 to 128 serves as a coordination point for NAD(+); the sequence is TVLVTGASGFVGTHVSIALRRRGDGVLGLDNF. Tyr247 functions as the Proton acceptor in the catalytic mechanism.

This sequence belongs to the NAD(P)-dependent epimerase/dehydratase family. In terms of assembly, homodimer. In leaves, pollen and siliques, but not in roots or flowers.

The protein resides in the golgi apparatus. Its subcellular location is the golgi stack membrane. The catalysed reaction is UDP-alpha-D-glucuronate = UDP-alpha-D-galacturonate. Its function is as follows. Involved in the synthesis of the negatively charged monosaccharide that forms the backbone of pectic cell wall components. The polypeptide is UDP-glucuronate 4-epimerase 5 (GAE5) (Arabidopsis thaliana (Mouse-ear cress)).